The following is a 119-amino-acid chain: MATTIPSPFNWDSSFCVGNNELNEQHKKLFALINALDANRSSASALKELLDFVVMHFKAEEDLFAKVNFSDSTSHKETHDKFVQDALGLKTVGDAEIQFIKQWLVNHIKGSDMKYKGVL.

Residues His26, His56, Glu60, His75, His79, His107, and Asp112 each coordinate Fe cation.

This sequence belongs to the hemerythrin family.

Oxygen-binding protein. The oxygen-binding site contains two iron atoms. This Naegleria fowleri (Brain eating amoeba) protein is Hemerythrin-like protein (nfa1).